We begin with the raw amino-acid sequence, 217 residues long: Endo-1,4-beta-xylanase (217 aa).

The first 17 residues, 1–17, serve as a signal peptide directing secretion; the sequence is MQFLIPVVILCVSLVDS. The GH11 domain occupies 20–217; it reads VLYNNEIGFN…SSGFADITVS (198 aa). Asn56 and Asn80 each carry an N-linked (GlcNAc...) asparagine glycan. The active-site Nucleophile is Glu107. Glu204 serves as the catalytic Proton donor.

This sequence belongs to the glycosyl hydrolase 11 (cellulase G) family. As to expression, expressed in larval carcasses and gut, and adult gut.

Its subcellular location is the secreted. It carries out the reaction Endohydrolysis of (1-&gt;4)-beta-D-xylosidic linkages in xylans.. It participates in glycan degradation; xylan degradation. In Phaedon cochleariae (Mustard beetle), this protein is Endo-1,4-beta-xylanase.